Consider the following 122-residue polypeptide: uncharacterized protein (122 aa).

Transmembrane regions (helical) follow at residues 9–29 and 60–80; these read VATV…STWV and LFSF…CLIM.

It localises to the cytoplasm. Its subcellular location is the membrane. This is an uncharacterized protein from Schizosaccharomyces pombe (strain 972 / ATCC 24843) (Fission yeast).